An 88-amino-acid chain; its full sequence is Large ribosomal subunit protein uL23c (88 aa).

The protein belongs to the universal ribosomal protein uL23 family. In terms of assembly, part of the 50S ribosomal subunit.

It is found in the plastid. It localises to the chloroplast. Its function is as follows. Binds to 23S rRNA. The sequence is that of Large ribosomal subunit protein uL23c (rpl23) from Spirogyra maxima (Green alga).